Reading from the N-terminus, the 1121-residue chain is Cuscuta receptor 1 (1121 aa).

The first 20 residues, M1–G20, serve as a signal peptide directing secretion. The Extracellular portion of the chain corresponds to C21 to Q1058. N91 is a glycosylation site (N-linked (GlcNAc...) asparagine). LRR repeat units follow at residues F98–K122, L126–S152, L185–E209, L210–I233, F234–L259, S260–K282, M284–S308, and F309–L331. A glycan (N-linked (GlcNAc...) asparagine) is linked at N224. Residues N298, N321, and N333 are each glycosylated (N-linked (GlcNAc...) asparagine). The stretch at L334 to S360 is one LRR 9 repeat. N372 and N406 each carry an N-linked (GlcNAc...) asparagine glycan. 21 LRR repeats span residues L383 to N406, L407 to R432, L433 to D457, K459 to N479, Q507 to N531, H556 to A580, F581 to I605, L607 to V628, S630 to P654, H655 to S678, L680 to N701, R702 to L725, K726 to L749, L751 to F772, S773 to L796, S797 to L820, N822 to Q846, L914 to M938, S939 to N961, L962 to L986, and S988 to T1012. N-linked (GlcNAc...) asparagine glycans are attached at residues N531, N576, and N588. Residue N689 is glycosylated (N-linked (GlcNAc...) asparagine). A glycan (N-linked (GlcNAc...) asparagine) is linked at N771. N-linked (GlcNAc...) asparagine glycans are attached at residues N822, N937, N945, N976, N998, N1014, and N1041. The chain crosses the membrane as a helical span at residues C1059–L1079. Topologically, residues C1080–G1121 are cytoplasmic.

Belongs to the RLP family. Interacts with an 11 kDa glycine-rich protein (GRP) of C.reflexa. Interacts with SOBIR1 and SOBIR1-like kinases; presence or absence of GRP has no effect on interaction.

It localises to the cell membrane. The protein resides in the cell surface. Involved in plant defense. Contributes to resistance against parasitic plant C.reflexa. Acts as a receptor for the 11 kDa glycine-rich protein (GRP) of C.reflexa inducing immune responses such as emission of stress-related phytohormone ethylene, reactive oxygen species (ROS) release, and hypersensitive cell death. Recognizes a specific pathogen-associated molecular pattern (PAMP), a cysteine-rich peptide 21 (crip21), from GRP located on the cell wall of C.reflexa. This Solanum lycopersicum (Tomato) protein is Cuscuta receptor 1.